The sequence spans 255 residues: F-box/SPRY domain-containing protein 1 (255 aa).

Residues 3-51 enclose the F-box domain; the sequence is DPVAALCNYNVLEVIFSYLELDDLSHCSQVCKSWYHFLNDENSDVWRWH. In terms of domain architecture, B30.2/SPRY spans 61–253; it reads LKSDLLSSVP…VSMVYLGTPL (193 aa).

Belongs to the FBXO45/Fsn family. Component of an E3 ubiquitin ligase complex composed of hiw and Fsn.

The protein localises to the synapse. The protein operates within protein modification; protein ubiquitination. Its function is as follows. Required in the presynaptic motoneuron to down-regulate the levels of wnd and restrain synaptic terminal growth at the neuromuscular junction (NMJ). The protein is F-box/SPRY domain-containing protein 1 of Drosophila sechellia (Fruit fly).